The following is a 302-amino-acid chain: RNA polymerase sigma factor RpoH (302 aa).

A sigma-70 factor domain-2 region spans residues 57-126 (LVTSHLRLVA…IQEYILRSWS (70 aa)). The short motif at 81 to 84 (ELIS) is the Interaction with polymerase core subunit RpoC element. Residues 235-286 (AMDKLNDREKHILTERRLSDNPKTLEELSQVYGVSRERVRQIEVRAFDKLQK) form a sigma-70 factor domain-4 region. Residues 259–278 (LEELSQVYGVSRERVRQIEV) constitute a DNA-binding region (H-T-H motif).

It belongs to the sigma-70 factor family. RpoH subfamily. In terms of assembly, interacts with the RNA polymerase core enzyme.

The protein localises to the cytoplasm. Functionally, sigma factors are initiation factors that promote the attachment of RNA polymerase to specific initiation sites and are then released. This sigma factor is involved in regulation of expression of heat shock genes. In Zymomonas mobilis subsp. mobilis (strain ATCC 31821 / ZM4 / CP4), this protein is RNA polymerase sigma factor RpoH.